The chain runs to 202 residues: Holliday junction branch migration complex subunit RuvA (202 aa).

The segment at 1-64 (MIGRLSGTLL…EDAHLLFGFA (64 aa)) is domain I. Residues 65–143 (GRAERELFRQ…SLPSADLLSP (79 aa)) are domain II. The interval 144 to 152 (APAAGAALL) is flexible linker. A domain III region spans residues 153–202 (VENDERADISQALQALGYSAREAEAALKSVPDGTDVATGIRLALKALARP).

Belongs to the RuvA family. As to quaternary structure, homotetramer. Forms an RuvA(8)-RuvB(12)-Holliday junction (HJ) complex. HJ DNA is sandwiched between 2 RuvA tetramers; dsDNA enters through RuvA and exits via RuvB. An RuvB hexamer assembles on each DNA strand where it exits the tetramer. Each RuvB hexamer is contacted by two RuvA subunits (via domain III) on 2 adjacent RuvB subunits; this complex drives branch migration. In the full resolvosome a probable DNA-RuvA(4)-RuvB(12)-RuvC(2) complex forms which resolves the HJ.

It is found in the cytoplasm. Its function is as follows. The RuvA-RuvB-RuvC complex processes Holliday junction (HJ) DNA during genetic recombination and DNA repair, while the RuvA-RuvB complex plays an important role in the rescue of blocked DNA replication forks via replication fork reversal (RFR). RuvA specifically binds to HJ cruciform DNA, conferring on it an open structure. The RuvB hexamer acts as an ATP-dependent pump, pulling dsDNA into and through the RuvAB complex. HJ branch migration allows RuvC to scan DNA until it finds its consensus sequence, where it cleaves and resolves the cruciform DNA. This Laribacter hongkongensis (strain HLHK9) protein is Holliday junction branch migration complex subunit RuvA.